We begin with the raw amino-acid sequence, 423 residues long: UPF0229 protein PSPA7_0730 (423 aa).

Residues 84-107 form a disordered region; that stretch reads AGEHIARPSGGGGGRGGGKASNSG. Residues 92 to 102 show a composition bias toward gly residues; sequence SGGGGGRGGGK.

This sequence belongs to the UPF0229 family.

The protein is UPF0229 protein PSPA7_0730 of Pseudomonas paraeruginosa (strain DSM 24068 / PA7) (Pseudomonas aeruginosa (strain PA7)).